A 296-amino-acid polypeptide reads, in one-letter code: Cytidine deaminase (296 aa).

2 CMP/dCMP-type deaminase domains span residues 48–168 (DADA…FGPV) and 187–296 (QNMN…FIEE). 89-91 (NME) serves as a coordination point for substrate. H102 serves as a coordination point for Zn(2+). E104 (proton donor) is an active-site residue. Zn(2+) is bound by residues C129 and C132.

This sequence belongs to the cytidine and deoxycytidylate deaminase family. In terms of assembly, homodimer. It depends on Zn(2+) as a cofactor.

The catalysed reaction is cytidine + H2O + H(+) = uridine + NH4(+). It carries out the reaction 2'-deoxycytidine + H2O + H(+) = 2'-deoxyuridine + NH4(+). In terms of biological role, this enzyme scavenges exogenous and endogenous cytidine and 2'-deoxycytidine for UMP synthesis. This is Cytidine deaminase from Pectobacterium carotovorum subsp. carotovorum (strain PC1).